The chain runs to 241 residues: Ribosome assembly factor mrt4 (241 aa).

This sequence belongs to the universal ribosomal protein uL10 family. As to quaternary structure, associates with the pre-60S ribosomal particle.

The protein localises to the nucleus. It localises to the nucleolus. It is found in the cytoplasm. In terms of biological role, component of the ribosome assembly machinery. Nuclear paralog of the ribosomal protein P0, it binds pre-60S subunits at an early stage of assembly in the nucleolus, and is replaced by P0 in cytoplasmic pre-60S subunits and mature 80S ribosomes. The protein is Ribosome assembly factor mrt4 of Schizosaccharomyces pombe (strain 972 / ATCC 24843) (Fission yeast).